The following is a 438-amino-acid chain: uncharacterized protein (438 aa).

The FAD-binding PCMH-type domain occupies Ile-23–Ala-193. FAD contacts are provided by residues Val-55–Gly-59, His-60–Ser-61, Gln-65, Asp-117, Thr-122, Ser-128–Phe-132, Ile-183, Tyr-393, and Ala-430–Tyr-433. A Pros-8alpha-FAD histidine modification is found at His-60.

Belongs to the oxygen-dependent FAD-linked oxidoreductase family. FAD serves as cofactor.

In terms of biological role, the FAS-operon encodes genes involved in cytokinin production and in host plant fasciation (leafy gall). This is an uncharacterized protein from Rhodococcoides fascians (Rhodococcus fascians).